The chain runs to 411 residues: MNRFSKIRQYSTLLQTAEKYSVPTYAKPSVILTKGKGAYLWDSNDNKYIDFSAGIAVTALGHSNPEITKILAEQSSQLMHCSNLFNNEWAPRLQESLVEETLKSGGMKGARKVFLANSGTEANEAALKFARKVGTLSSPDKTEFVNFEKAFHGRTMGALSVTPNPKYQAPFAPLVPGVKTGVYNDPKAADLITEKTCGVIVEPVQGEGGVYKANDEFLQALRNKCDEVGAMLIFDEIQCGLGRTGRLWAHDKVHPDILTMAKALGNGFPIGATMVTEAVADKIAIGDHGTTYGGNPLASRVGHYVLSQVASKEVLDNVKKVSQQIRDAVAEVQEEFPELITEVRGDGLLLGIQFSKDPSKVVAAARENGLLVITAGTNTVRLVPALNIDQEAVTEGLEILKKAIRDNAKDL.

Residue K262 is modified to N6-(pyridoxal phosphate)lysine.

Belongs to the class-III pyridoxal-phosphate-dependent aminotransferase family. Pyridoxal 5'-phosphate serves as cofactor.

It localises to the mitochondrion matrix. The enzyme catalyses N(2)-acetyl-L-ornithine + 2-oxoglutarate = N-acetyl-L-glutamate 5-semialdehyde + L-glutamate. The protein operates within amino-acid biosynthesis; L-arginine biosynthesis; N(2)-acetyl-L-ornithine from L-glutamate: step 4/4. In Yarrowia lipolytica (strain CLIB 122 / E 150) (Yeast), this protein is Acetylornithine aminotransferase, mitochondrial (ARG8).